The chain runs to 424 residues: Tyrosine--tRNA ligase (424 aa).

Tyr37 is a binding site for L-tyrosine. The short motif at 42-51 (PTADSLHLGH) is the 'HIGH' region element. L-tyrosine contacts are provided by Tyr175 and Gln179. The 'KMSKS' region signature appears at 235–239 (KFGKT). Lys238 provides a ligand contact to ATP. An S4 RNA-binding domain is found at 357–414 (ADLQQALVAAELVPSRGQARTLISSNAVSVNGEKQASIDYVFDDADRLYSRYTLLRRG).

Belongs to the class-I aminoacyl-tRNA synthetase family. TyrS type 1 subfamily. As to quaternary structure, homodimer.

Its subcellular location is the cytoplasm. It catalyses the reaction tRNA(Tyr) + L-tyrosine + ATP = L-tyrosyl-tRNA(Tyr) + AMP + diphosphate + H(+). Functionally, catalyzes the attachment of tyrosine to tRNA(Tyr) in a two-step reaction: tyrosine is first activated by ATP to form Tyr-AMP and then transferred to the acceptor end of tRNA(Tyr). The chain is Tyrosine--tRNA ligase from Sodalis glossinidius (strain morsitans).